The primary structure comprises 1575 residues: Ras GTPase-activating-like protein IQGAP2 (1575 aa).

Ser16 carries the post-translational modification Phosphoserine. The 116-residue stretch at 41–156 folds into the Calponin-homology (CH) domain; the sequence is LCHLEEAKRW…YCIHALSLYL (116 aa). Thr356 carries the post-translational modification Phosphothreonine. Positions 594–627 constitute a WW domain; sequence ESSEGSWVTLNVQEKYNYYYNTDSKEGSWVPPEL. Phosphoserine is present on residues Ser595 and Ser599. IQ domains are found at residues 690–719, 720–749, and 750–779; these read QTES…VFAG, NVDS…YFED, and HKNE…SENP. A phosphothreonine mark is found at Thr782, Thr881, Thr1002, and Thr1269. The Ras-GAP domain occupies 933–1182; that stretch reads YLLLKLFKTA…QEFRKYFQEA (250 aa). Phosphoserine occurs at positions 1279 and 1461.

Its function is as follows. Binds to activated CDC42 and RAC1 but does not seem to stimulate their GTPase activity. Associates with calmodulin. The sequence is that of Ras GTPase-activating-like protein IQGAP2 (Iqgap2) from Mus musculus (Mouse).